Consider the following 901-residue polypeptide: HTH-type transcriptional regulator MalT (901 aa).

39 to 46 (SPAGYGKT) lines the ATP pocket. The HTH luxR-type domain maps to 829 to 894 (ELIRTSPLTQ…DAVQHAQQLL (66 aa)). The segment at residues 853 to 872 (NEQIAGELDVAATTIKTHIR) is a DNA-binding region (H-T-H motif).

This sequence belongs to the MalT family. As to quaternary structure, monomer in solution. Oligomerizes to an active state in the presence of the positive effectors ATP and maltotriose.

Its activity is regulated as follows. Activated by ATP and maltotriose, which are both required for DNA binding. Functionally, positively regulates the transcription of the maltose regulon whose gene products are responsible for uptake and catabolism of malto-oligosaccharides. Specifically binds to the promoter region of its target genes, recognizing a short DNA motif called the MalT box. The sequence is that of HTH-type transcriptional regulator MalT from Klebsiella pneumoniae (strain 342).